The sequence spans 277 residues: 5-formyltetrahydrofolate cyclo-ligase, mitochondrial (277 aa).

The N-terminal 48 residues, 1–48 (MIGARVFCITTTALRRSPIFFFPKIPTRPVFRLSPATRPIVAMSTTSK), are a transit peptide targeting the mitochondrion. 60–64 (KRVVR) is a binding site for ATP. Residues E113 and 207–211 (RGGGY) contribute to the substrate site. ATP-binding positions include 206–213 (GRGGGYYD) and D254.

It belongs to the 5-formyltetrahydrofolate cyclo-ligase family. In terms of assembly, monomer.

It is found in the mitochondrion. It catalyses the reaction (6S)-5-formyl-5,6,7,8-tetrahydrofolate + ATP = (6R)-5,10-methenyltetrahydrofolate + ADP + phosphate. Functionally, contributes to tetrahydrofolate metabolism and photorespiration through the regulation of serine hydroxymethyltransferase. Prefers the pentalutamyl to the monoglutamyl form of 5-formyltetrahydrofolate. This Arabidopsis thaliana (Mouse-ear cress) protein is 5-formyltetrahydrofolate cyclo-ligase, mitochondrial (5FCL).